Here is a 159-residue protein sequence, read N- to C-terminus: Ribosomal RNA large subunit methyltransferase H (159 aa).

S-adenosyl-L-methionine is bound by residues Leu76, Gly108, and 127–132; that span reads FSKMTF.

This sequence belongs to the RNA methyltransferase RlmH family. Homodimer.

It is found in the cytoplasm. It carries out the reaction pseudouridine(1915) in 23S rRNA + S-adenosyl-L-methionine = N(3)-methylpseudouridine(1915) in 23S rRNA + S-adenosyl-L-homocysteine + H(+). Its function is as follows. Specifically methylates the pseudouridine at position 1915 (m3Psi1915) in 23S rRNA. The sequence is that of Ribosomal RNA large subunit methyltransferase H from Geobacillus sp. (strain WCH70).